Here is a 736-residue protein sequence, read N- to C-terminus: Elongation factor 2 (736 aa).

Residues 18–234 enclose the tr-type G domain; that stretch reads TRVRNIGIIA…VIDAYTASDK (217 aa). GTP is bound by residues 27-34, 93-97, and 147-150; these read AHVDHGKT, DTPGH, and NKVD. Residue H603 is modified to Diphthamide.

This sequence belongs to the TRAFAC class translation factor GTPase superfamily. Classic translation factor GTPase family. EF-G/EF-2 subfamily.

It localises to the cytoplasm. Its function is as follows. Catalyzes the GTP-dependent ribosomal translocation step during translation elongation. During this step, the ribosome changes from the pre-translocational (PRE) to the post-translocational (POST) state as the newly formed A-site-bound peptidyl-tRNA and P-site-bound deacylated tRNA move to the P and E sites, respectively. Catalyzes the coordinated movement of the two tRNA molecules, the mRNA and conformational changes in the ribosome. This chain is Elongation factor 2 (fusA), found in Saccharolobus solfataricus (strain ATCC 35092 / DSM 1617 / JCM 11322 / P2) (Sulfolobus solfataricus).